The chain runs to 138 residues: MSAEQQPQQQQKLRWGIAWIYSSSNNTIITITDLTGAETVARVSGGQVVRADKDKPSPWAAMQAAYKAAQLAMARGINAVHIKVRGPGGYGMKVPGPGASAAIRALARSGLVIGRIEDVTPIPHDIIRPPSGRKGRRV.

This sequence belongs to the universal ribosomal protein uS11 family. In terms of assembly, part of the 30S ribosomal subunit.

Its function is as follows. Located on the platform of the 30S subunit. The sequence is that of Small ribosomal subunit protein uS11 from Pyrobaculum arsenaticum (strain DSM 13514 / JCM 11321 / PZ6).